The primary structure comprises 375 residues: 23S rRNA (uracil(747)-C(5))-methyltransferase RlmC (375 aa).

[4Fe-4S] cluster contacts are provided by Cys-3, Cys-11, Cys-14, and Cys-87. Residues Gln-212, Phe-241, Glu-262, and Asn-307 each contribute to the S-adenosyl-L-methionine site. Catalysis depends on Cys-334, which acts as the Nucleophile.

The protein belongs to the class I-like SAM-binding methyltransferase superfamily. RNA M5U methyltransferase family. RlmC subfamily.

It catalyses the reaction uridine(747) in 23S rRNA + S-adenosyl-L-methionine = 5-methyluridine(747) in 23S rRNA + S-adenosyl-L-homocysteine + H(+). Its function is as follows. Catalyzes the formation of 5-methyl-uridine at position 747 (m5U747) in 23S rRNA. The chain is 23S rRNA (uracil(747)-C(5))-methyltransferase RlmC from Salmonella arizonae (strain ATCC BAA-731 / CDC346-86 / RSK2980).